The primary structure comprises 821 residues: Probable phosphoenolpyruvate synthase (821 aa).

Histidine 444 (tele-phosphohistidine intermediate) is an active-site residue. Arginine 543, arginine 590, glutamate 687, glycine 709, threonine 710, asparagine 711, and aspartate 712 together coordinate substrate. Glutamate 687 contacts Mg(2+). Position 712 (aspartate 712) interacts with Mg(2+). The active-site Proton donor is the cysteine 759.

The protein belongs to the PEP-utilizing enzyme family. Mg(2+) is required as a cofactor.

It catalyses the reaction pyruvate + ATP + H2O = phosphoenolpyruvate + AMP + phosphate + 2 H(+). Its pathway is carbohydrate biosynthesis; gluconeogenesis. Catalyzes the phosphorylation of pyruvate to phosphoenolpyruvate. In Pyrococcus horikoshii (strain ATCC 700860 / DSM 12428 / JCM 9974 / NBRC 100139 / OT-3), this protein is Probable phosphoenolpyruvate synthase (ppsA).